Here is an 881-residue protein sequence, read N- to C-terminus: DNA mismatch repair protein MutS (881 aa).

627-634 (GPNMGGKS) lines the ATP pocket.

The protein belongs to the DNA mismatch repair MutS family.

This protein is involved in the repair of mismatches in DNA. It is possible that it carries out the mismatch recognition step. This protein has a weak ATPase activity. The protein is DNA mismatch repair protein MutS of Acinetobacter baumannii (strain AB307-0294).